The following is a 140-amino-acid chain: Chromatin accessibility complex 16kD protein (140 aa).

The tract at residues 111 to 140 (LNRSAGSDDDDDDDDDDDEEESESESESDE) is disordered. A compositionally biased stretch (acidic residues) spans 117–140 (SDDDDDDDDDDDEEESESESESDE).

As to quaternary structure, component of the chromatin accessibility complex (CHRAC), composed of Chrac-14, Chrac-16, Acf and Iswi. Forms a heterodimer with Chrac-14. The Chrac-14/Chrac-16 heterodimer interacts with Acf (via N-terminus). Stabilizes the interaction between Chrac-14 and Iswi.

Its subcellular location is the nucleus. In terms of biological role, histone-like protein which promotes nucleosome sliding of ATP-dependent nucleosome remodeling complexes. Part of the chromatin-accessibility complex (CHRAC) which uses energy/ATP to increase the general accessibility of DNA in chromatin. As a heterodimer with Chrac-14, binds DNA and facilitates nucleosome sliding by Acf. As part of the CHRAC complex, required for oogenesis. This is Chromatin accessibility complex 16kD protein from Drosophila melanogaster (Fruit fly).